The following is a 423-amino-acid chain: Lipase member M (423 aa).

An N-terminal signal peptide occupies residues 1–33; sequence MLETLSRQWIVSHRMEMWLLILVAYMFQRNVNS. An N-linked (GlcNAc...) asparagine glycan is attached at Asn-48. The AB hydrolase-1 domain occupies 92–392; sequence PVVLLQHGLV…EWAHVDFIWG (301 aa). Residue Ser-186 is the Nucleophile of the active site. A disulfide bond links Cys-260 and Cys-269. Residues Asp-357 and His-386 each act as charge relay system in the active site.

Belongs to the AB hydrolase superfamily. Lipase family. In terms of tissue distribution, exclusively expressed in the epidermis within the granular keratinocytes.

It localises to the secreted. Plays a highly specific role in the last step of keratinocyte differentiation. May have an essential function in lipid metabolism of the most differentiated epidermal layers. This Homo sapiens (Human) protein is Lipase member M (LIPM).